We begin with the raw amino-acid sequence, 197 residues long: Pyridoxal 5'-phosphate synthase subunit PdxT (197 aa).

52 to 54 (GES) is a binding site for L-glutamine. The active-site Nucleophile is Cys84. Residues Arg111 and 139–140 (IR) contribute to the L-glutamine site. Active-site charge relay system residues include His175 and Glu177.

This sequence belongs to the glutaminase PdxT/SNO family. In the presence of PdxS, forms a dodecamer of heterodimers. Only shows activity in the heterodimer.

The enzyme catalyses aldehydo-D-ribose 5-phosphate + D-glyceraldehyde 3-phosphate + L-glutamine = pyridoxal 5'-phosphate + L-glutamate + phosphate + 3 H2O + H(+). It carries out the reaction L-glutamine + H2O = L-glutamate + NH4(+). It participates in cofactor biosynthesis; pyridoxal 5'-phosphate biosynthesis. Its function is as follows. Catalyzes the hydrolysis of glutamine to glutamate and ammonia as part of the biosynthesis of pyridoxal 5'-phosphate. The resulting ammonia molecule is channeled to the active site of PdxS. This Halorubrum lacusprofundi (strain ATCC 49239 / DSM 5036 / JCM 8891 / ACAM 34) protein is Pyridoxal 5'-phosphate synthase subunit PdxT.